The sequence spans 499 residues: Maturase K (499 aa).

This sequence belongs to the intron maturase 2 family. MatK subfamily.

The protein localises to the plastid. The protein resides in the chloroplast. Usually encoded in the trnK tRNA gene intron. Probably assists in splicing its own and other chloroplast group II introns. This is Maturase K from Ceratozamia mexicana (Mexican horncone).